The chain runs to 220 residues: Protein myomaker (220 aa).

Position 1 (M1) is a topological domain, extracellular. A helical membrane pass occupies residues 2–22; that stretch reads GAFIAKMLLPTISSLVFVPAA. Residues 23 to 37 are Cytoplasmic-facing; it reads SVAAKRGFHMEAMVY. A helical transmembrane segment spans residues 38 to 58; that stretch reads FFTMFFTAIYHACDGPGLSIL. The Extracellular segment spans residues 59–64; sequence CFMKYD. A helical membrane pass occupies residues 65 to 85; sequence ILEYFSVYGTAISMWVTLLAL. At 86–93 the chain is on the cytoplasmic side; that stretch reads GDFDEPKR. The chain crosses the membrane as a helical span at residues 94 to 110; it reads SSLTMFGVLTAAVRIYQ. The Extracellular segment spans residues 111 to 112; sequence DR. The helical transmembrane segment at 113-133 threads the bilayer; sequence LGYGIYSGPIGTAVFMITVKW. Residues 134–153 lie on the Cytoplasmic side of the membrane; it reads LQKMKEKKGLYPDKSVYTQQ. Residues 154–174 form a helical membrane-spanning segment; it reads VGPGCCFGALALMLRFYFEEW. D175 is a topological domain (extracellular). The helical transmembrane segment at 176-196 threads the bilayer; sequence YAYVHSFYHVSLAMSFILLLP. The Cytoplasmic segment spans residues 197–220; it reads KKNRYAGTGRNAAKLNCYTLCCCV.

This sequence belongs to the TMEM8 family.

It is found in the cell membrane. Functionally, myoblast-specific protein that mediates myoblast fusion, an essential step for the formation of multi-nucleated muscle fibers. Actively participates in the membrane fusion reaction by mediating the mixing of cell membrane lipids (hemifusion) upstream of mymx. This is Protein myomaker from Danio rerio (Zebrafish).